A 262-amino-acid chain; its full sequence is UPF0619 GPI-anchored membrane protein C1322.10 (262 aa).

Positions 1-20 (MLARVGTTLFFLANALAAYA) are cleaved as a signal peptide. Disordered regions lie at residues 136-165 (STSA…SSST) and 175-194 (ISSS…SGSI). Residues Asn-207 and Asn-227 are each glycosylated (N-linked (GlcNAc...) asparagine). Asn-242 is lipidated: GPI-like-anchor amidated asparagine. The propeptide at 243–262 (GVAQLSVAACMGIAALMLIA) is removed in mature form.

It belongs to the UPF0619 family.

The protein resides in the golgi apparatus membrane. It localises to the cell membrane. The protein is UPF0619 GPI-anchored membrane protein C1322.10 of Schizosaccharomyces pombe (strain 972 / ATCC 24843) (Fission yeast).